We begin with the raw amino-acid sequence, 353 residues long: Photosystem II protein D1 (353 aa).

Thr2 carries the post-translational modification N-acetylthreonine. Phosphothreonine is present on Thr2. The next 3 membrane-spanning stretches (helical) occupy residues Tyr29–Ser46, His118–Leu133, and Trp142–Ala156. His118 serves as a coordination point for chlorophyll a. Residue Tyr126 coordinates pheophytin a. The [CaMn4O5] cluster site is built by Asp170 and Glu189. Residues Phe197 to Leu218 traverse the membrane as a helical segment. His198 provides a ligand contact to chlorophyll a. A quinone is bound by residues His215 and Ser264–Phe265. Fe cation is bound at residue His215. His272 lines the Fe cation pocket. Residues Phe274 to Leu288 traverse the membrane as a helical segment. [CaMn4O5] cluster contacts are provided by His332, Glu333, Asp342, and Ala344. A propeptide spanning residues Gly345–Gly353 is cleaved from the precursor.

It belongs to the reaction center PufL/M/PsbA/D family. PSII is composed of 1 copy each of membrane proteins PsbA, PsbB, PsbC, PsbD, PsbE, PsbF, PsbH, PsbI, PsbJ, PsbK, PsbL, PsbM, PsbT, PsbX, PsbY, PsbZ, Psb30/Ycf12, at least 3 peripheral proteins of the oxygen-evolving complex and a large number of cofactors. It forms dimeric complexes. The cofactor is The D1/D2 heterodimer binds P680, chlorophylls that are the primary electron donor of PSII, and subsequent electron acceptors. It shares a non-heme iron and each subunit binds pheophytin, quinone, additional chlorophylls, carotenoids and lipids. D1 provides most of the ligands for the Mn4-Ca-O5 cluster of the oxygen-evolving complex (OEC). There is also a Cl(-1) ion associated with D1 and D2, which is required for oxygen evolution. The PSII complex binds additional chlorophylls, carotenoids and specific lipids.. Tyr-161 forms a radical intermediate that is referred to as redox-active TyrZ, YZ or Y-Z. In terms of processing, C-terminally processed by CTPA; processing is essential to allow assembly of the oxygen-evolving complex and thus photosynthetic growth.

It is found in the plastid. It localises to the chloroplast thylakoid membrane. The catalysed reaction is 2 a plastoquinone + 4 hnu + 2 H2O = 2 a plastoquinol + O2. In terms of biological role, photosystem II (PSII) is a light-driven water:plastoquinone oxidoreductase that uses light energy to abstract electrons from H(2)O, generating O(2) and a proton gradient subsequently used for ATP formation. It consists of a core antenna complex that captures photons, and an electron transfer chain that converts photonic excitation into a charge separation. The D1/D2 (PsbA/PsbD) reaction center heterodimer binds P680, the primary electron donor of PSII as well as several subsequent electron acceptors. The polypeptide is Photosystem II protein D1 (Morus indica (Mulberry)).